The primary structure comprises 938 residues: Isoleucine--tRNA ligase (938 aa).

A 'HIGH' region motif is present at residues 58-68 (PYANGSIHIGH). E561 is a binding site for L-isoleucyl-5'-AMP. Positions 602–606 (KMSKS) match the 'KMSKS' region motif. K605 serves as a coordination point for ATP. The Zn(2+) site is built by C901, C904, C921, and C924.

Belongs to the class-I aminoacyl-tRNA synthetase family. IleS type 1 subfamily. As to quaternary structure, monomer. Zn(2+) is required as a cofactor.

It is found in the cytoplasm. It carries out the reaction tRNA(Ile) + L-isoleucine + ATP = L-isoleucyl-tRNA(Ile) + AMP + diphosphate. In terms of biological role, catalyzes the attachment of isoleucine to tRNA(Ile). As IleRS can inadvertently accommodate and process structurally similar amino acids such as valine, to avoid such errors it has two additional distinct tRNA(Ile)-dependent editing activities. One activity is designated as 'pretransfer' editing and involves the hydrolysis of activated Val-AMP. The other activity is designated 'posttransfer' editing and involves deacylation of mischarged Val-tRNA(Ile). The polypeptide is Isoleucine--tRNA ligase (Citrobacter koseri (strain ATCC BAA-895 / CDC 4225-83 / SGSC4696)).